We begin with the raw amino-acid sequence, 274 residues long: NADPH-dependent 7-cyano-7-deazaguanine reductase (274 aa).

Residue 81 to 83 (IES) coordinates substrate. Residue 83-84 (SK) participates in NADPH binding. Cys-182 (thioimide intermediate) is an active-site residue. Asp-189 functions as the Proton donor in the catalytic mechanism. Position 221–222 (221–222 (HE)) interacts with substrate. 250–251 (RG) provides a ligand contact to NADPH.

This sequence belongs to the GTP cyclohydrolase I family. QueF type 2 subfamily. In terms of assembly, homodimer.

The protein localises to the cytoplasm. It catalyses the reaction 7-aminomethyl-7-carbaguanine + 2 NADP(+) = 7-cyano-7-deazaguanine + 2 NADPH + 3 H(+). The protein operates within tRNA modification; tRNA-queuosine biosynthesis. Catalyzes the NADPH-dependent reduction of 7-cyano-7-deazaguanine (preQ0) to 7-aminomethyl-7-deazaguanine (preQ1). The chain is NADPH-dependent 7-cyano-7-deazaguanine reductase from Hahella chejuensis (strain KCTC 2396).